The sequence spans 644 residues: Far upstream element-binding protein 1 (644 aa).

Disordered stretches follow at residues 1–31 (MADYSTVPPPSSGSAGGGGGGGGGGGVNDAF) and 44–94 (KIGG…PMHQ). Position 2 is an N-acetylalanine (A2). Over residues 14-27 (SAGGGGGGGGGGGV) the composition is skewed to gly residues. S52 and S55 each carry phosphoserine. A compositionally biased stretch (basic and acidic residues) spans 65–77 (RPLEDGDQPDAKK). Over residues 81–94 (QNDSFGTQLPPMHQ) the composition is skewed to polar residues. KH domains follow at residues 100–164 (VMTE…KRLL), 185–251 (NAVQ…KEMV), and 275–339 (NEGI…AEII). The residue at position 140 (S140) is a Phosphoserine. At T153 the chain carries Phosphothreonine. Omega-N-methylarginine is present on residues R321, R359, R361, and R363. The disordered stretch occupies residues 346–365 (VQAGNPGGPGPGGRGRGRGQ). A compositionally biased stretch (gly residues) spans 350–365 (NPGGPGPGGRGRGRGQ). The 68-residue stretch at 376–443 (LQEFNFIVPT…QQIDYARQLI (68 aa)) folds into the KH 4 domain. The residue at position 432 (T432) is a Phosphothreonine. Disordered regions lie at residues 447–532 (IGGP…GTDP) and 548–580 (QAQPPPAAPAGAPTTTQTNGQGDQQNPAPAGQV). Over residues 468-505 (PHGPPGPPGPGTPMGPYNPAPYNPGPPGPAPHGPPAPY) the composition is skewed to pro residues. Low complexity predominate over residues 556–573 (PAGAPTTTQTNGQGDQQN). S630 carries the post-translational modification Phosphoserine.

Found in a complex with PUF60 and far upstream element (FUSE) DNA segment. Interacts with PUF60 and JTV1. Post-translationally, ubiquitinated. This targets the protein for proteasome-mediated degradation.

It is found in the nucleus. Its function is as follows. Regulates MYC expression by binding to a single-stranded far-upstream element (FUSE) upstream of the MYC promoter. May act both as activator and repressor of transcription. The chain is Far upstream element-binding protein 1 (FUBP1) from Homo sapiens (Human).